Reading from the N-terminus, the 87-residue chain is Lantipeptide prochlorosin 3.3 (87 aa).

Residues 1–64 constitute a propeptide that is removed on maturation; the sequence is MSEEQLKAFI…DEELEAASGG (64 aa). Residue threonine 67 is modified to 2,3-didehydrobutyrine. Residues 75-85 constitute a cross-link (beta-methyllanthionine (Thr-Cys)); sequence TAGCYGGTKMC. Positions 78–82 form a cross-link, beta-methyllanthionine (Cys-Thr); that stretch reads CYGGT.

Post-translationally, cross-links are proved in vitro, when coepressed in E.coli with the ProcM lanthionine synthetase. In terms of processing, the beta-methyllanthionine residues have a DL configuration (with 2S,3S,6R stereochemistry). Maturation of prochlorosin involves the enzymatic conversion of Thr, and Ser into dehydrated AA and the formation of thioether bonds with cysteines. This is followed by membrane translocation and cleavage of the modified precursor.

The protein localises to the secreted. Functionally, lanthionine-containing peptide (lantipeptide) with unknown function. Does not show antibiotic activity against Lactococcus lactis 117 and Bacillus subtilis 6633 bacteria. Organisms that produce this peptide live in oligotrophic environments at very dilute concentrations, suggesting this peptide is not secreted to influence other bacteria. The chain is Lantipeptide prochlorosin 3.3 from Prochlorococcus marinus (strain MIT 9313).